A 73-amino-acid chain; its full sequence is Cell division protein ZapB (73 aa).

Residues 3–67 (LELLSKLETK…WNDKVTGLVG (65 aa)) are a coiled coil.

The protein belongs to the ZapB family. In terms of assembly, homodimer. The ends of the coiled-coil dimer bind to each other, forming polymers. Interacts with FtsZ.

Its subcellular location is the cytoplasm. Functionally, non-essential, abundant cell division factor that is required for proper Z-ring formation. It is recruited early to the divisome by direct interaction with FtsZ, stimulating Z-ring assembly and thereby promoting cell division earlier in the cell cycle. Its recruitment to the Z-ring requires functional FtsA or ZipA. The polypeptide is Cell division protein ZapB (Shewanella sp. (strain ANA-3)).